The primary structure comprises 1358 residues: Xanthine dehydrogenase (1358 aa).

Residues 18-107 enclose the 2Fe-2S ferredoxin-type domain; that stretch reads NQLLFFLNGE…GMAVTTIEGL (90 aa). Residues Cys56, Cys61, Cys64, Cys89, Cys129, Cys132, Cys164, and Cys166 each contribute to the [2Fe-2S] cluster site. Residues 253 to 447 enclose the FAD-binding PCMH-type domain; that stretch reads FTGSRVTWYT…ESVFIPYTRP (195 aa). Residues 281–288, Phe366, 376–380, Asp389, Leu437, and Lys455 contribute to the FAD site; these read IVVGNTEI and SIGGN. 2 residues coordinate Mo-molybdopterin: Gln805 and Phe836. Substrate contacts are provided by Glu840 and Arg918. Arg950 contacts Mo-molybdopterin. The substrate site is built by Tyr952 and Thr1048. Residue Ala1117 coordinates Mo-molybdopterin. Glu1302 (proton acceptor) is an active-site residue.

The protein belongs to the xanthine dehydrogenase family. As to quaternary structure, homodimer. The cofactor is FAD. It depends on Mo-molybdopterin as a cofactor. [2Fe-2S] cluster is required as a cofactor.

Its subcellular location is the peroxisome. It catalyses the reaction xanthine + NAD(+) + H2O = urate + NADH + H(+). It carries out the reaction hypoxanthine + NAD(+) + H2O = xanthine + NADH + H(+). Key enzyme in purine degradation. Catalyzes the oxidation of hypoxanthine to xanthine. Catalyzes the oxidation of xanthine to uric acid. The chain is Xanthine dehydrogenase (xdh) from Dictyostelium discoideum (Social amoeba).